The following is a 234-amino-acid chain: Transcription factor bHLH160 (234 aa).

Positions 1–13 (MSSQPNHQTSISS) are enriched in polar residues. Positions 1–67 (MSSQPNHQTS…GAAKKQDHNA (67 aa)) are disordered. The segment covering 27–37 (IVEKESAEKDT) has biased composition (basic and acidic residues). The 56-residue stretch at 60-115 (AKKQDHNAKERLRRMRLHASYLTLGTLLPDHSSSSSKKKWSAPSIIDNVITYIPKL) folds into the bHLH domain.

The protein belongs to the bHLH protein family.

Its subcellular location is the nucleus. The protein is Transcription factor bHLH160 of Arabidopsis thaliana (Mouse-ear cress).